A 154-amino-acid polypeptide reads, in one-letter code: Large ribosomal subunit protein uL13 (154 aa).

This sequence belongs to the universal ribosomal protein uL13 family. Part of the 50S ribosomal subunit.

Functionally, this protein is one of the early assembly proteins of the 50S ribosomal subunit, although it is not seen to bind rRNA by itself. It is important during the early stages of 50S assembly. The protein is Large ribosomal subunit protein uL13 of Rhodopseudomonas palustris (strain BisB18).